Reading from the N-terminus, the 204-residue chain is Guanylate kinase (204 aa).

Residues 5–184 form the Guanylate kinase-like domain; the sequence is GLLIVLSGPS…ACDKIKAIVL (180 aa). ATP is bound at residue 12 to 19; that stretch reads GPSGVGKG.

This sequence belongs to the guanylate kinase family.

The protein localises to the cytoplasm. The catalysed reaction is GMP + ATP = GDP + ADP. In terms of biological role, essential for recycling GMP and indirectly, cGMP. The chain is Guanylate kinase (gmk) from Bacillus subtilis (strain 168).